A 338-amino-acid chain; its full sequence is MKTKEVTPRGDSGEKLARDLLRLVPPQTHKLGTFRASELGRDLRAIVANYAPKTISGHIQIFRDDFIAPPYRQPLYGEFLVHAKTFHPQEPRGTFVFAFSVGDGPECTSVDTIFSPVSLFRVCGLGADAAPHTHRISHIWYESESDFLNVAANVRELIENCSLHKFLSPVGPLVQNIQSTFLNKITTVVKGEVLSNRSPPENIKLVLPSDLFFDMDETCPYPPSGDPVKPRVCYYVCILYVMVNNIPSASLQFFRTGKGASDVVFFLRRYYSDAIANKITVLGDNLDINNLTLGAVCMLGYSSSQSTPGRGNLHFRSYSLPTVEVSDFVAQPGSWTLI.

The protein belongs to the herpesviridae TRX1 protein family. As to quaternary structure, interacts with TRX2, MCP and capsid vertex component 2/CVC2.

The protein resides in the virion. It localises to the host nucleus. Structural component of the T=16 icosahedral capsid. The capsid is composed of pentamers and hexamers of major capsid protein/MCP, which are linked together by heterotrimers called triplexes. These triplexes are formed by a single molecule of triplex protein 1/TRX1 and two copies of triplex protein 2/TRX2. Additionally, TRX1 is required for efficient transport of TRX2 to the nucleus, which is the site of capsid assembly. The protein is Triplex capsid protein 1 of Equine herpesvirus 2 (strain 86/87) (EHV-2).